The following is a 158-amino-acid chain: UPF0260 protein RHECIAT_CH0001358 (158 aa).

Belongs to the UPF0260 family.

This chain is UPF0260 protein RHECIAT_CH0001358, found in Rhizobium etli (strain CIAT 652).